Consider the following 140-residue polypeptide: uncharacterized protein (140 aa).

This is an uncharacterized protein from Acidianus ambivalens (Desulfurolobus ambivalens).